Reading from the N-terminus, the 268-residue chain is Very-long-chain aldehyde decarbonylase GL1-8 (268 aa).

Helical transmembrane passes span 26–46 (IGTF…SLLF), 70–90 (CVVR…ILSY), 107–127 (WTVV…IFYW), and 164–184 (ILFL…HLFT). A Fatty acid hydroxylase domain is found at 114 to 249 (VLFFFVLEDF…FIYMDWLFGT (136 aa)).

This sequence belongs to the sterol desaturase family. As to quaternary structure, homodimer.

The protein resides in the endoplasmic reticulum membrane. The enzyme catalyses a long-chain fatty aldehyde + 2 NADPH + O2 + H(+) = a long-chain alkane + formate + 2 NADP(+) + H2O. Functionally, aldehyde decarbonylase involved in the conversion of aldehydes to alkanes. Core component of a very-long-chain alkane synthesis complex. The polypeptide is Very-long-chain aldehyde decarbonylase GL1-8 (Oryza sativa subsp. indica (Rice)).